Here is a 154-residue protein sequence, read N- to C-terminus: SsrA-binding protein (154 aa).

Residues 134–154 form a disordered region; the sequence is ETLRRRDAKREVERALKEKNR.

The protein belongs to the SmpB family.

The protein resides in the cytoplasm. In terms of biological role, required for rescue of stalled ribosomes mediated by trans-translation. Binds to transfer-messenger RNA (tmRNA), required for stable association of tmRNA with ribosomes. tmRNA and SmpB together mimic tRNA shape, replacing the anticodon stem-loop with SmpB. tmRNA is encoded by the ssrA gene; the 2 termini fold to resemble tRNA(Ala) and it encodes a 'tag peptide', a short internal open reading frame. During trans-translation Ala-aminoacylated tmRNA acts like a tRNA, entering the A-site of stalled ribosomes, displacing the stalled mRNA. The ribosome then switches to translate the ORF on the tmRNA; the nascent peptide is terminated with the 'tag peptide' encoded by the tmRNA and targeted for degradation. The ribosome is freed to recommence translation, which seems to be the essential function of trans-translation. The chain is SsrA-binding protein from Halalkalibacterium halodurans (strain ATCC BAA-125 / DSM 18197 / FERM 7344 / JCM 9153 / C-125) (Bacillus halodurans).